Here is a 249-residue protein sequence, read N- to C-terminus: Ubiquinone/menaquinone biosynthesis C-methyltransferase UbiE (249 aa).

S-adenosyl-L-methionine is bound by residues threonine 72, aspartate 93, and 121–122 (DA).

It belongs to the class I-like SAM-binding methyltransferase superfamily. MenG/UbiE family.

The enzyme catalyses a 2-demethylmenaquinol + S-adenosyl-L-methionine = a menaquinol + S-adenosyl-L-homocysteine + H(+). The catalysed reaction is a 2-methoxy-6-(all-trans-polyprenyl)benzene-1,4-diol + S-adenosyl-L-methionine = a 5-methoxy-2-methyl-3-(all-trans-polyprenyl)benzene-1,4-diol + S-adenosyl-L-homocysteine + H(+). It participates in quinol/quinone metabolism; menaquinone biosynthesis; menaquinol from 1,4-dihydroxy-2-naphthoate: step 2/2. Its pathway is cofactor biosynthesis; ubiquinone biosynthesis. Functionally, methyltransferase required for the conversion of demethylmenaquinol (DMKH2) to menaquinol (MKH2) and the conversion of 2-polyprenyl-6-methoxy-1,4-benzoquinol (DDMQH2) to 2-polyprenyl-3-methyl-6-methoxy-1,4-benzoquinol (DMQH2). In Saccharophagus degradans (strain 2-40 / ATCC 43961 / DSM 17024), this protein is Ubiquinone/menaquinone biosynthesis C-methyltransferase UbiE.